Here is a 2130-residue protein sequence, read N- to C-terminus: Highly reducing polyketide synthase anuA (2130 aa).

In terms of domain architecture, Ketosynthase family 3 (KS3) spans 1–213; sequence MKAGVLSGTS…GANCHVILEQ (213 aa). Residues 317–644 form the Malonyl-CoA:ACP transacylase (MAT) domain; the sequence is FVFTGQGSQW…SFAGNLWLKG (328 aa). The N-terminal hotdog fold stretch occupies residues 701-836; it reads HELLGSLLTG…GSIAIHPRNA (136 aa). A PKS/mFAS DH domain is found at 701–1000; it reads HELLGSLLTG…LSPYQSTSQA (300 aa). Catalysis depends on His-733, which acts as the Proton acceptor; for dehydratase activity. The C-terminal hotdog fold stretch occupies residues 849–1000; that stretch reads LESTAKRTWY…LSPYQSTSQA (152 aa). Asp-914 functions as the Proton donor; for dehydratase activity in the catalytic mechanism. One can recognise an Enoyl reductase (ER) domain in the interval 1405–1722; sequence GQLDTIYFQQ…SRSRIGKVAI (318 aa). The 181-residue stretch at 1747-1927 folds into the Ketoreductase (KR) domain; the sequence is SYVMVGCLGG…AVAVGLGMIS (181 aa). Residues 2047–2125 form the Carrier domain; it reads TLDEAVLDHI…SLRDLAMTSL (79 aa). An O-(pantetheine 4'-phosphoryl)serine modification is found at Ser-2084.

Pantetheine 4'-phosphate serves as cofactor.

Its pathway is secondary metabolite biosynthesis. In terms of biological role, highly reducing polyketide synthase; part of the gene cluster that mediates the biosynthesis of annullatin D, an alkylated aromatic polyketide with a fused dihydrobenzofuran lactone ring system that exhibits potent agonistic activities toward the cannabinoid receptors. The annullatin backbone 2-hydroxymethyl-3-pentylphenol is assembled from one acetyl-CoA starter unit and 5 malonyl-CoA elongation units by cooperation of the highly reducing polyketide synthase anuA, the short-chain dehydrogenase anuB and the oxidoreductase anuC, before being hydroxylated at the C-5 alkyl chain by the cytochrome P450 monooxygenase anuE to form (8S)-annullatin E. The prenyltransferase anuH subsequently installs one isoprenyl group at the benzene ring to form (8S)-annullatin J. Enzymatic or nonenzymatic dihydro-benzofuran ring formation between the prenyl and the phenolic hydroxyl groups in (8S)-annullatin J results in two diastereomers (2S,9S)-annullatin H and compound 12. The intermediate (2S,9S)-annullatin H is then converted to (2S,9S)-annullatin D by the FAD-linked oxidoreductase anuG-catalyzed five-member lactone ring formation. The isomer 12 acts as a substrate for the short-chain dehydrogenase anuF and is oxidized to (2R)-annullatin F, which is subsequently acetylated by an acetyltransferase leading to (2R)-annullatin G formation. The remaining enzymes identified within the cluster, anuD, anuI and anuJ, seem not to be involved in annullatin biosynthesis. This Penicillium roqueforti (strain FM164) protein is Highly reducing polyketide synthase anuA.